The primary structure comprises 483 residues: Siroheme synthase (483 aa).

Residues 1-203 (MNYFPIFANL…RQNTLAEREL (203 aa)) are precorrin-2 dehydrogenase /sirohydrochlorin ferrochelatase. NAD(+)-binding positions include 22-23 (AV) and 43-44 (KH). The residue at position 128 (S128) is a Phosphoserine. The tract at residues 214–483 (GFVSLVGAGP…LGTGQEQQAA (270 aa)) is uroporphyrinogen-III C-methyltransferase. P223 is an S-adenosyl-L-methionine binding site. D246 (proton acceptor) is an active-site residue. Residue K268 is the Proton donor of the active site. S-adenosyl-L-methionine is bound by residues 299–301 (GGD), V304, 329–330 (TA), M381, and G410.

In the N-terminal section; belongs to the precorrin-2 dehydrogenase / sirohydrochlorin ferrochelatase family. The protein in the C-terminal section; belongs to the precorrin methyltransferase family.

The enzyme catalyses uroporphyrinogen III + 2 S-adenosyl-L-methionine = precorrin-2 + 2 S-adenosyl-L-homocysteine + H(+). The catalysed reaction is precorrin-2 + NAD(+) = sirohydrochlorin + NADH + 2 H(+). It catalyses the reaction siroheme + 2 H(+) = sirohydrochlorin + Fe(2+). The protein operates within cofactor biosynthesis; adenosylcobalamin biosynthesis; precorrin-2 from uroporphyrinogen III: step 1/1. It participates in cofactor biosynthesis; adenosylcobalamin biosynthesis; sirohydrochlorin from precorrin-2: step 1/1. Its pathway is porphyrin-containing compound metabolism; siroheme biosynthesis; precorrin-2 from uroporphyrinogen III: step 1/1. It functions in the pathway porphyrin-containing compound metabolism; siroheme biosynthesis; siroheme from sirohydrochlorin: step 1/1. The protein operates within porphyrin-containing compound metabolism; siroheme biosynthesis; sirohydrochlorin from precorrin-2: step 1/1. Functionally, multifunctional enzyme that catalyzes the SAM-dependent methylations of uroporphyrinogen III at position C-2 and C-7 to form precorrin-2 via precorrin-1. Then it catalyzes the NAD-dependent ring dehydrogenation of precorrin-2 to yield sirohydrochlorin. Finally, it catalyzes the ferrochelation of sirohydrochlorin to yield siroheme. This chain is Siroheme synthase, found in Neisseria meningitidis serogroup C / serotype 2a (strain ATCC 700532 / DSM 15464 / FAM18).